Reading from the N-terminus, the 166-residue chain is NAD(P)H-quinone oxidoreductase subunit I, chloroplastic (166 aa).

2 consecutive 4Fe-4S ferredoxin-type domains span residues 55–84 (GRIH…VDWK) and 95–124 (LNYS…MTEE). Residues C64, C67, C70, C74, C104, C107, C110, and C114 each contribute to the [4Fe-4S] cluster site.

The protein belongs to the complex I 23 kDa subunit family. In terms of assembly, NDH is composed of at least 16 different subunits, 5 of which are encoded in the nucleus. It depends on [4Fe-4S] cluster as a cofactor.

It localises to the plastid. The protein localises to the chloroplast thylakoid membrane. The enzyme catalyses a plastoquinone + NADH + (n+1) H(+)(in) = a plastoquinol + NAD(+) + n H(+)(out). It catalyses the reaction a plastoquinone + NADPH + (n+1) H(+)(in) = a plastoquinol + NADP(+) + n H(+)(out). In terms of biological role, NDH shuttles electrons from NAD(P)H:plastoquinone, via FMN and iron-sulfur (Fe-S) centers, to quinones in the photosynthetic chain and possibly in a chloroplast respiratory chain. The immediate electron acceptor for the enzyme in this species is believed to be plastoquinone. Couples the redox reaction to proton translocation, and thus conserves the redox energy in a proton gradient. This Picradeniopsis absinthifolia (Hairyseed bahia) protein is NAD(P)H-quinone oxidoreductase subunit I, chloroplastic.